The primary structure comprises 420 residues: Glucose-1-phosphate adenylyltransferase 2 (420 aa).

Alpha-D-glucose 1-phosphate contacts are provided by residues Tyr109, Gly175, 190–191 (EK), and Ser208.

This sequence belongs to the bacterial/plant glucose-1-phosphate adenylyltransferase family. Homotetramer.

It catalyses the reaction alpha-D-glucose 1-phosphate + ATP + H(+) = ADP-alpha-D-glucose + diphosphate. The protein operates within glycan biosynthesis; glycogen biosynthesis. Functionally, involved in the biosynthesis of ADP-glucose, a building block required for the elongation reactions to produce glycogen. Catalyzes the reaction between ATP and alpha-D-glucose 1-phosphate (G1P) to produce pyrophosphate and ADP-Glc. This chain is Glucose-1-phosphate adenylyltransferase 2, found in Pseudoalteromonas atlantica (strain T6c / ATCC BAA-1087).